We begin with the raw amino-acid sequence, 379 residues long: tRNA(Met) cytidine acetate ligase (379 aa).

Residues 8–21 (IAEFNPFHKGHEYL), G97, N153, and R176 contribute to the ATP site.

It belongs to the TmcAL family.

The protein resides in the cytoplasm. The enzyme catalyses cytidine(34) in elongator tRNA(Met) + acetate + ATP = N(4)-acetylcytidine(34) in elongator tRNA(Met) + AMP + diphosphate. Its function is as follows. Catalyzes the formation of N(4)-acetylcytidine (ac(4)C) at the wobble position of elongator tRNA(Met), using acetate and ATP as substrates. First activates an acetate ion to form acetyladenylate (Ac-AMP) and then transfers the acetyl group to tRNA to form ac(4)C34. The chain is tRNA(Met) cytidine acetate ligase from Lactococcus lactis subsp. cremoris (strain MG1363).